The chain runs to 890 residues: Kinesin-like protein KIN-7C, mitochondrial (890 aa).

Polar residues predominate over residues 1–13; that stretch reads MSATRSQRSSTIS. The segment at 1–66 is disordered; it reads MSATRSQRSS…TSSAAASSTA (66 aa). The transit peptide at 1-73 directs the protein to the mitochondrion; it reads MSATRSQRSS…STAVASTKLK (73 aa). Residues 40–66 are compositionally biased toward low complexity; it reads SPVTSSSPLLRSSPSPSTSSAAASSTA. The Kinesin motor domain maps to 75–394; sequence NITVTIRFRP…LKFAQRCKHV (320 aa). Residue 155–162 participates in ATP binding; that stretch reads GVTSSGKT. Positions 395–468 form a coiled coil; that stretch reads EIKASRNKIM…MGRIQRLTKL (74 aa). A disordered region spans residues 511–595; the sequence is DGAVSTVSEH…TTRRENAAAI (85 aa). Residues 569–579 show a composition bias toward low complexity; sequence SQASGSPSSSS. 2 coiled-coil regions span residues 664-693 and 729-765; these read HIRDQIQKLEDEISEKKDQIRVLEQQIIEI and ADNRILQEQLQMTKSENAEMQETIILLRQQLDSLAER. The tract at residues 768–797 is disordered; it reads TQQIAGDESSGKNIHNRNGEESEIYSGAGT. Residues 818-884 are a coiled coil; sequence NETALNSQAL…AEEVTRLCNE (67 aa).

Belongs to the TRAFAC class myosin-kinesin ATPase superfamily. Kinesin family. KIN-7 subfamily.

Its subcellular location is the mitochondrion. In Arabidopsis thaliana (Mouse-ear cress), this protein is Kinesin-like protein KIN-7C, mitochondrial.